A 292-amino-acid chain; its full sequence is Aquaporin-3 (292 aa).

The Cytoplasmic segment spans residues methionine 1–glutamine 24. The chain crosses the membrane as a helical span at residues alanine 25 to serine 42. Over valine 43–phenylalanine 56 the chain is Extracellular. A helical transmembrane segment spans residues leucine 57–alanine 74. At glycine 75–serine 78 the chain is on the cytoplasmic side. The discontinuously helical intramembrane region spans glycine 79–phenylalanine 92. An NPA 1 motif is present at residues asparagine 83–alanine 85. The Cytoplasmic segment spans residues leucine 93–lysine 100. Residues leucine 101–glycine 121 form a helical membrane-spanning segment. The Extracellular portion of the chain corresponds to leucine 122–asparagine 159. Residue asparagine 141 is glycosylated (N-linked (GlcNAc...) asparagine). A helical transmembrane segment spans residues glycine 160–alanine 177. The Cytoplasmic portion of the chain corresponds to isoleucine 178–glycine 189. A helical transmembrane segment spans residues leucine 190–methionine 206. Over glycine 207 to serine 210 the chain is Extracellular. An intramembrane region (discontinuously helical) is located at residues glycine 211–leucine 224. Residues asparagine 215–alanine 217 carry the NPA 2 motif. The Extracellular portion of the chain corresponds to phenylalanine 225–tryptophan 242. Residues tryptophan 243–methionine 264 traverse the membrane as a helical segment. Topologically, residues isoleucine 265 to isoleucine 292 are cytoplasmic.

It belongs to the MIP/aquaporin (TC 1.A.8) family. As to quaternary structure, homotetramer; each monomer provides an independent glycerol/water pore. Could also exist in other oligomeric states. As to expression, detected in principal cells in collecting ducts in kidney medulla (at protein level). Renal medulla and colon. Predominantly in the inner medulla. Expressed in basal layer of epidermal keratinocytes.

It is found in the cell membrane. The protein resides in the basolateral cell membrane. It catalyses the reaction glycerol(in) = glycerol(out). It carries out the reaction H2O(in) = H2O(out). The catalysed reaction is urea(in) = urea(out). The enzyme catalyses H2O2(out) = H2O2(in). Aquaglyceroporins form homotetrameric transmembrane channels, with each monomer independently mediating glycerol and water transport across the plasma membrane along their osmotic gradient. Could also be permeable to urea. Also participates in cell permeability to H2O2 and H2O2-mediated signaling. In skin, transports glycerol to the epidermis and stratum corneum, where it maintains hydration, elasticity, and supports lipid biosynthesis for barrier repair. In kidney, contributes to the reabsorption of water, helping the body maintain proper fluid balance. The sequence is that of Aquaporin-3 from Mus musculus (Mouse).